The chain runs to 91 residues: Probable Fe(2+)-trafficking protein (91 aa).

Belongs to the Fe(2+)-trafficking protein family.

Functionally, could be a mediator in iron transactions between iron acquisition and iron-requiring processes, such as synthesis and/or repair of Fe-S clusters in biosynthetic enzymes. The protein is Probable Fe(2+)-trafficking protein of Thiobacillus denitrificans (strain ATCC 25259 / T1).